We begin with the raw amino-acid sequence, 246 residues long: 3'(2'),5'-bisphosphate nucleotidase CysQ (246 aa).

Positions 64, 83, 85, 86, and 205 each coordinate Mg(2+). Glu64 contacts substrate. Substrate contacts are provided by residues 85–88 (LDGT) and Asp205.

The protein belongs to the inositol monophosphatase superfamily. CysQ family. Requires Mg(2+) as cofactor.

It is found in the cell inner membrane. It catalyses the reaction adenosine 3',5'-bisphosphate + H2O = AMP + phosphate. With respect to regulation, inhibited by lithium and calcium. Its function is as follows. Converts adenosine-3',5'-bisphosphate (PAP) to AMP. May also convert adenosine 3'-phosphate 5'-phosphosulfate (PAPS) to adenosine 5'-phosphosulfate (APS). Has 10000-fold lower activity towards inositol 1,4-bisphosphate (Ins(1,4)P2). In Escherichia coli (strain K12), this protein is 3'(2'),5'-bisphosphate nucleotidase CysQ.